The sequence spans 253 residues: MTDIPHDHPRYESLLAREKVAAGVKMGITSIQGLIAQGRGESFDYLIGERSTESALYAERAAVAALLLAENPVISVNGNVAALAPDKVVTLADITGARIEVNLFHRTDTRVHLIIEQLKASGAAEVLGKNPDASLELSHDRRLVSSKGIYTADVVLVPLEDGDRCEKLVEMGKTVITIDLNPLSRTSKTATISIVDNLTRALGNMAKFAQEMKKERKEELVKLITTYDNKRTLSEAISEIQEHLKTMAAETGY.

ATP is bound by residues Arg-17, Arg-39, 179–181, 185–186, and 197–198; these read DLN, RT, and NL.

Belongs to the archaeal phosphopantothenate synthetase family. In terms of assembly, homodimer.

It catalyses the reaction (R)-4-phosphopantoate + beta-alanine + ATP = (R)-4'-phosphopantothenate + AMP + diphosphate + H(+). It functions in the pathway cofactor biosynthesis; coenzyme A biosynthesis. Its function is as follows. Catalyzes the condensation of (R)-4-phosphopantoate and beta-alanine to 4'-phosphopantothenate in the CoA biosynthesis pathway. The chain is 4-phosphopantoate--beta-alanine ligase from Methanosarcina mazei (strain ATCC BAA-159 / DSM 3647 / Goe1 / Go1 / JCM 11833 / OCM 88) (Methanosarcina frisia).